Consider the following 492-residue polypeptide: Replication factor C large subunit (492 aa).

46–53 (GPPGSGKT) contacts ATP. Residues 445-492 (VIPKRPKISDNQISEILTKDNNPKDDVKKASKKPESTSKKQATLDKFF) are disordered. The segment covering 461-482 (LTKDNNPKDDVKKASKKPESTS) has biased composition (basic and acidic residues).

This sequence belongs to the activator 1 small subunits family. RfcL subfamily. In terms of assembly, heteromultimer composed of small subunits (RfcS) and large subunits (RfcL).

In terms of biological role, part of the RFC clamp loader complex which loads the PCNA sliding clamp onto DNA. In Methanococcus vannielii (strain ATCC 35089 / DSM 1224 / JCM 13029 / OCM 148 / SB), this protein is Replication factor C large subunit.